The following is a 68-amino-acid chain: Large ribosomal subunit protein bL32 (68 aa).

It belongs to the bacterial ribosomal protein bL32 family.

This is Large ribosomal subunit protein bL32 from Orientia tsutsugamushi (strain Boryong) (Rickettsia tsutsugamushi).